Reading from the N-terminus, the 397-residue chain is Succinate--CoA ligase [ADP-forming] subunit beta (397 aa).

Residues Lys-9–Gln-244 form the ATP-grasp domain. Residues Lys-46, Gly-53–Gly-55, Glu-99, Leu-102, and Glu-107 contribute to the ATP site. Asn-199 and Asp-213 together coordinate Mg(2+). Substrate is bound by residues Asn-264 and Gly-321–Met-323.

It belongs to the succinate/malate CoA ligase beta subunit family. In terms of assembly, heterotetramer of two alpha and two beta subunits. Requires Mg(2+) as cofactor.

The catalysed reaction is succinate + ATP + CoA = succinyl-CoA + ADP + phosphate. The enzyme catalyses GTP + succinate + CoA = succinyl-CoA + GDP + phosphate. Its pathway is carbohydrate metabolism; tricarboxylic acid cycle; succinate from succinyl-CoA (ligase route): step 1/1. Functionally, succinyl-CoA synthetase functions in the citric acid cycle (TCA), coupling the hydrolysis of succinyl-CoA to the synthesis of either ATP or GTP and thus represents the only step of substrate-level phosphorylation in the TCA. The beta subunit provides nucleotide specificity of the enzyme and binds the substrate succinate, while the binding sites for coenzyme A and phosphate are found in the alpha subunit. In Alkaliphilus metalliredigens (strain QYMF), this protein is Succinate--CoA ligase [ADP-forming] subunit beta.